A 607-amino-acid chain; its full sequence is Dolichyl-diphosphooligosaccharide--protein glycosyltransferase subunit 1 (607 aa).

The signal sequence occupies residues 1–23 (MEAPAAGLFLLLLLGTWAPAPGS). The Lumenal segment spans residues 24-438 (ASSEAPPLIN…TFNKVLMLQE (415 aa)). Lys187 carries the post-translational modification N6-acetyllysine. Asn299 carries N-linked (GlcNAc...) asparagine glycosylation. A helical transmembrane segment spans residues 439–457 (PLLVVAAFYILFFTVIIYV). Topologically, residues 458–607 (RLDFSITKDP…TKIDHILDAL (150 aa)) are cytoplasmic. Lys538 bears the N6-acetyllysine; alternate mark. Residue Lys538 forms a Glycyl lysine isopeptide (Lys-Gly) (interchain with G-Cter in SUMO2); alternate linkage.

The protein belongs to the OST1 family. As to quaternary structure, component of the oligosaccharyltransferase (OST) complex. OST exists in two different complex forms which contain common core subunits RPN1, RPN2, OST48, OST4, DAD1 and TMEM258, either STT3A or STT3B as catalytic subunits, and form-specific accessory subunits. STT3A complex assembly occurs through the formation of 3 subcomplexes. Subcomplex 1 contains RPN1 and TMEM258, subcomplex 2 contains the STT3A-specific subunits STT3A, DC2/OSTC, and KCP2 as well as the core subunit OST4, and subcomplex 3 contains RPN2, DAD1, and OST48. The STT3A complex can form stable complexes with the Sec61 complex or with both the Sec61 and TRAP complexes. Interacts with TMEM35A/NACHO. Ubiquitinated by the ECS(ASB11) complex. Ubiquitinated by RNF128, leading to degradation in a proteasome/lysosome-dependent manner. In terms of processing, ufmylated by UFL1 in response to endoplasmic reticulum stress, promoting reticulophagy of endoplasmic reticulum sheets. As to expression, expressed in all tissues tested.

It localises to the endoplasmic reticulum membrane. It is found in the melanosome. It functions in the pathway protein modification; protein glycosylation. Subunit of the oligosaccharyl transferase (OST) complex that catalyzes the initial transfer of a defined glycan (Glc(3)Man(9)GlcNAc(2) in eukaryotes) from the lipid carrier dolichol-pyrophosphate to an asparagine residue within an Asn-X-Ser/Thr consensus motif in nascent polypeptide chains, the first step in protein N-glycosylation. N-glycosylation occurs cotranslationally and the complex associates with the Sec61 complex at the channel-forming translocon complex that mediates protein translocation across the endoplasmic reticulum (ER). All subunits are required for a maximal enzyme activity. The polypeptide is Dolichyl-diphosphooligosaccharide--protein glycosyltransferase subunit 1 (Homo sapiens (Human)).